The sequence spans 352 residues: Phosphoribosylformylglycinamidine cyclo-ligase (352 aa).

This sequence belongs to the AIR synthase family.

It is found in the cytoplasm. It catalyses the reaction 2-formamido-N(1)-(5-O-phospho-beta-D-ribosyl)acetamidine + ATP = 5-amino-1-(5-phospho-beta-D-ribosyl)imidazole + ADP + phosphate + H(+). It participates in purine metabolism; IMP biosynthesis via de novo pathway; 5-amino-1-(5-phospho-D-ribosyl)imidazole from N(2)-formyl-N(1)-(5-phospho-D-ribosyl)glycinamide: step 2/2. The sequence is that of Phosphoribosylformylglycinamidine cyclo-ligase from Coxiella burnetii (strain RSA 331 / Henzerling II).